A 2212-amino-acid polypeptide reads, in one-letter code: Voltage-dependent P/Q-type calcium channel subunit alpha-1A (2212 aa).

The Cytoplasmic portion of the chain corresponds to 1–100; the sequence is MARFGDEMPG…KYAKKITEWP (100 aa). An I repeat occupies 87-365; it reads NVVRKYAKKI…LVLGVLSGEF (279 aa). A helical transmembrane segment spans residues 101–119; that stretch reads PFEYMILATIIANCIVLAL. Residues 120–138 are Extracellular-facing; it reads EQHLPDDDKTPMSERLDDT. Residues 139-156 traverse the membrane as a helical segment; sequence EPYFIGIFCFEAGIKIVA. The Cytoplasmic segment spans residues 157–168; the sequence is LGFAFHKGSYLR. The chain crosses the membrane as a helical span at residues 169 to 184; the sequence is NGWNVMDFVVVLTGIL. The Extracellular segment spans residues 185 to 192; the sequence is ATVGTEFD. The helical transmembrane segment at 193-211 threads the bilayer; the sequence is LRTLRAVRVLRPLKLVSGI. Topologically, residues 212–230 are cytoplasmic; the sequence is PSLQVVLKSIMKAMIPLLQ. A helical transmembrane segment spans residues 231–250; sequence IGLLLFFAILIFAIIGLEFY. The Extracellular segment spans residues 251–337; the sequence is MGKFHTTCFE…NSNDASGNTW (87 aa). A glycan (N-linked (GlcNAc...) asparagine) is linked at N285. Residue E320 participates in Ca(2+) binding. Residues 338 to 362 form a helical membrane-spanning segment; that stretch reads NWLYFIPLIIIGSFFMLNLVLGVLS. At 363 to 489 the chain is on the cytoplasmic side; it reads GEFAKERERV…FYIRRMVKTQ (127 aa). Residues 385 to 402 are binding to the beta subunit; the sequence is QQIERELNGYMEWISKAE. T411 is subject to Phosphothreonine. 2 positions are modified to phosphoserine: S450 and S453. An II repeat occupies 475–719; it reads ERRMRFYIRR…VFLAIAVDNL (245 aa). The chain crosses the membrane as a helical span at residues 490–509; the sequence is AFYWTVLSLVALNTLWLAIV. The Extracellular segment spans residues 510-523; it reads HYNQPEWLSDFLYY. The chain crosses the membrane as a helical span at residues 524 to 543; the sequence is AEFIFLGLFMSEMFIKMYGL. The Cytoplasmic portion of the chain corresponds to 544-551; it reads GTRPYFHS. A helical transmembrane segment spans residues 552-570; sequence SFNCFDCGVIIGSIFEVIW. Residues 571–580 are Extracellular-facing; the sequence is AVIKPGTSFG. The chain crosses the membrane as a helical span at residues 581–599; the sequence is ISVLRALRLLRIFKVTKYW. The Cytoplasmic portion of the chain corresponds to 600–618; sequence ASLRNLVVSLLNSMKSIIS. A helical transmembrane segment spans residues 619-638; that stretch reads LLFLLFLFIVVFALLGMQLF. Topologically, residues 639–691 are extracellular; the sequence is GGQFNFDEGTPPTNFDTFPAAIMTVFQILTGEDWNEVMYDEIKSQGGVQGGMV. E670 lines the Ca(2+) pocket. The helical transmembrane segment at 692–716 threads the bilayer; that stretch reads FSIYFIVLTLFGNYTLLNVFLAIAV. The Cytoplasmic segment spans residues 717 to 1190; the sequence is DNLANAQELT…TNPLRRLCHY (474 aa). S752, S755, and S792 each carry phosphoserine. Composition is skewed to basic and acidic residues over residues 814–824, 850–862, 871–924, and 932–958; these read PDVKTHLDRPL, RPRE…DARR, APGR…EGEP, and RPGD…RAAD. Disordered regions lie at residues 814 to 1117 and 1137 to 1170; these read PDVK…RKPE and VNKN…KPMP. Phosphoserine occurs at positions 1038, 1042, and 1051. The segment covering 1056–1073 has biased composition (polar residues); that stretch reads GNSTNPGPALATNPQNAA. Residues 1074–1083 show a composition bias toward low complexity; it reads SRRTPNNPGN. A compositionally biased stretch (polar residues) spans 1094-1111; it reads ENSLIVTNPSSTQPNSAK. Residues 1153–1163 are compositionally biased toward acidic residues; the sequence is KKEEEEADPGE. The III repeat unit spans residues 1182-1465; the sequence is NPLRRLCHYI…IFVALIIITF (284 aa). The chain crosses the membrane as a helical span at residues 1191–1214; it reads ILNLRYFEMCILMVIAMSSIALAA. The Extracellular segment spans residues 1215–1231; it reads EDPVQPNAPRNNVLRYF. A helical transmembrane segment spans residues 1232 to 1251; sequence DYVFTGVFTFEMVIKMIDLG. Residues 1252 to 1258 are Cytoplasmic-facing; the sequence is LVLHQGA. Residues 1259–1282 form a helical membrane-spanning segment; the sequence is YFRDLWNILDFIVVSGALVAFAFT. Over 1283 to 1293 the chain is Extracellular; the sequence is GNSKGKDINTI. A helical transmembrane segment spans residues 1294–1311; it reads KSLRVLRVLRPLKTIKRL. Topologically, residues 1312–1330 are cytoplasmic; the sequence is PKLKAVFDCVVNSLKNVFN. The helical transmembrane segment at 1331–1350 threads the bilayer; it reads ILIVYMLFMFIFAVVAVQLF. Residues 1351–1437 lie on the Extracellular side of the membrane; that stretch reads KGKFFHCTDE…QGPSPGYRME (87 aa). Ca(2+) is bound at residue E1411. The chain crosses the membrane as a helical span at residues 1438–1462; the sequence is MSIFYVVYFVVFPFFFVNIFVALII. The Cytoplasmic portion of the chain corresponds to 1463–1518; it reads ITFQEQGDKMMEEYSLEKNERACIDFAISAKPLTRHMPQNKQSFQYRMWQFVVSPP. An IV repeat occupies 1502–1765; it reads NKQSFQYRMW…LFVAVIMDNF (264 aa). Residues 1519 to 1537 form a helical membrane-spanning segment; the sequence is FEYTIMAMIALNTIVLMMK. Over 1538–1551 the chain is Extracellular; sequence FYGASVAYENALRV. Residues 1552–1573 traverse the membrane as a helical segment; sequence FNIVFTSLFSLECVLKVMAFGI. Topologically, residues 1574–1580 are cytoplasmic; it reads LNYFRDA. The chain crosses the membrane as a helical span at residues 1581–1600; sequence WNIFDFVTVLGSITDILVTE. Residues 1601–1607 are Extracellular-facing; that stretch reads FGNNFIN. N-linked (GlcNAc...) asparagine glycosylation is present at N1607. A helical membrane pass occupies residues 1608 to 1626; the sequence is LSFLRLFRAARLIKLLRQG. The Cytoplasmic portion of the chain corresponds to 1627-1645; it reads YTIRILLWTFVQSFKALPY. The helical transmembrane segment at 1646–1665 threads the bilayer; that stretch reads VCLLIAMLFFIYAIIGMQVF. Residues 1666–1737 lie on the Extracellular side of the membrane; the sequence is GNIGIDGEDE…IQKPECGNEF (72 aa). Residues 1738 to 1763 traverse the membrane as a helical segment; the sequence is AYFYFVSFIFLCSFLMLNLFVAVIMD. Residues 1764–2212 lie on the Cytoplasmic side of the membrane; that stretch reads NFEYLTRDSS…EGREHATHRQ (449 aa). T1935 is modified (phosphothreonine). A disordered region spans residues 1940–2212; sequence QRMEPPSPTQ…EGREHATHRQ (273 aa). Composition is skewed to polar residues over residues 1948 to 1963 and 1972 to 1997; these read TQEG…STQL and QESS…TGTW. Phosphoserine occurs at positions 1998, 2016, 2028, 2030, 2071, and 2091. Over residues 2008 to 2017 the composition is skewed to polar residues; the sequence is PNSQPNSQSV. Positions 2018-2034 are enriched in basic and acidic residues; sequence EMREMGTDGYSDSEHYL. Over residues 2064–2073 the composition is skewed to polar residues; it reads LSTISDTSPM. Basic and acidic residues-rich tracts occupy residues 2085–2102 and 2143–2153; these read RRLD…ENQR and PSKDRDQDRGR. The segment covering 2154 to 2172 has biased composition (basic residues); it reads PKDRKHRPHHHHHHHHHHP. Over residues 2173–2212 the composition is skewed to basic and acidic residues; that stretch reads PAPDRERYAQERPDTGRARAREQRWSRSPSEGREHATHRQ.

This sequence belongs to the calcium channel alpha-1 subunit (TC 1.A.1.11) family. CACNA1A subfamily. Voltage-dependent calcium channels are multisubunit complexes, consisting of alpha-1, alpha-2, beta and delta subunits in a 1:1:1:1 ratio. The channel activity is directed by the pore-forming and voltage-sensitive alpha-1 subunit. In many cases, this subunit is sufficient to generate voltage-sensitive calcium channel activity. The auxiliary subunits beta and alpha-2/delta linked by a disulfide bridge regulate the channel activity. Interacts (via C-terminal CDB motif) with CABP1 in the pre- and postsynaptic membranes. Interacts with the spider omega-agatoxin-IVA (AC P30288). Interacts with TSPOAP1. In terms of tissue distribution, brain specific. Purkinje cells contain predominantly P-type VSCC, the Q-type being a prominent calcium current in cerebellar granule cells. Also found in heart, in kidney distal convoluted tubule (DCT), and in pituitary.

It is found in the cell membrane. It carries out the reaction Ca(2+)(in) = Ca(2+)(out). Functionally, voltage-sensitive calcium channels (VSCC) mediate the entry of calcium ions into excitable cells and are also involved in a variety of calcium-dependent processes, including muscle contraction, hormone or neurotransmitter release, gene expression, cell motility, cell division and cell death. The isoform alpha-1A gives rise to P and/or Q-type calcium currents. P/Q-type calcium channels belong to the 'high-voltage activated' (HVA) group and are specifically blocked by the spider omega-agatoxin-IVA (AC P30288). They are however insensitive to dihydropyridines (DHP). The sequence is that of Voltage-dependent P/Q-type calcium channel subunit alpha-1A from Rattus norvegicus (Rat).